We begin with the raw amino-acid sequence, 109 residues long: Cell division protein ZapA (109 aa).

Positions 21 to 99 form a coiled coil; sequence PEQRDALNQA…IEQALLEQGR (79 aa).

The protein belongs to the ZapA family. Type 1 subfamily. In terms of assembly, homodimer. Interacts with FtsZ.

It is found in the cytoplasm. Its function is as follows. Activator of cell division through the inhibition of FtsZ GTPase activity, therefore promoting FtsZ assembly into bundles of protofilaments necessary for the formation of the division Z ring. It is recruited early at mid-cell but it is not essential for cell division. The polypeptide is Cell division protein ZapA (Klebsiella pneumoniae subsp. pneumoniae (strain ATCC 700721 / MGH 78578)).